Here is a 1375-residue protein sequence, read N- to C-terminus: Probable GMP synthase [glutamine-hydrolyzing] (1375 aa).

The region spanning 7 to 119 (QILVLDFGSQ…VLEIMESSQD (113 aa)) is the Glutamine amidotransferase type-1; first part domain. Catalysis depends on C84, which acts as the Nucleophile. Positions 120–500 (SKDSSCFAFQ…NNATQGFKSC (381 aa)) are insert-1. 2 consecutive N-acetyltransferase domains span residues 141–300 (LSFD…KALE) and 318–484 (VFLR…LEKK). One can recognise a Glutamine amidotransferase type-1; second part domain in the interval 501–580 (SLFKGIKQDS…AVGICGANTC (80 aa)). Catalysis depends on residues H554 and E556. The interval 597-1071 (IVYGGKAHCE…SGVANSLKIT (475 aa)) is insert-2. The 154-residue stretch at 612–765 (MQIQEAFKHI…ELIPLSIARE (154 aa)) folds into the N-acetyltransferase 3 domain. The disordered stretch occupies residues 1011–1036 (RIVDSQHTESSDIKGQSHLESSADSG). The segment covering 1014–1027 (DSQHTESSDIKGQS) has biased composition (basic and acidic residues). The 196-residue stretch at 1055-1250 (YLEGNDRSGV…LGMPESMLMR (196 aa)) folds into the GMPS ATP-PPase domain. An ATP-binding site is contributed by 1083–1089 (SGGVDSS).

Homodimer.

It catalyses the reaction XMP + L-glutamine + ATP + H2O = GMP + L-glutamate + AMP + diphosphate + 2 H(+). The protein operates within purine metabolism; GMP biosynthesis; GMP from XMP (L-Gln route): step 1/1. Catalyzes the synthesis of GMP from XMP. The chain is Probable GMP synthase [glutamine-hydrolyzing] (guaA) from Helicobacter hepaticus (strain ATCC 51449 / 3B1).